The chain runs to 615 residues: MKWVTLISFIFLFSSATSRNLQRFARDAEHKSEIAHRYNDLKEETFKAVAMITFAQYLQRCSYEGLSKLVKDVVDLAQKCVANEDAPECSKPLPSIILDEICQVEKLRDSYGAMADCCSKADPERNECFLSFKVSQPDFVQPYQRPASDVICQEYQDNRVSFLGHFIYSVARRHPFLYAPAILSFAVDFEHALQSCCKESDVGACLDTKEIVMREKAKGVSVKQQYFCGILKQFGDRVFQARQLIYLSQKYPKAPFSEVSKFVHDSIGVHKECCEGDMVECMDDMARMMSNLCSQQDVFSGKIKDCCEKPIVERSQCIMEAEFDEKPADLPSLVEKYIEDKEVCKSFEAGHDAFMAEFVYEYSRRHPEFSIQLIMRIAKGYESLLEKCCKTDNPAECYANAQEQLNQHIKETQDVVKTNCDLLHDHGEADFLKSILIRYTKKMPQVPTDLLLETGKKMTTIGTKCCQLGEDRRMACSEGYLSIVIHDTCRKQETTPINDNVSQCCSQLYANRRPCFTAMGVDTKYVPPPFNPDMFSFDEKLCSAPAEEREVGQMKLLINLIKRKPQMTEEQIKTIADGFTAMVDKCCKQSDINTCFGEEGANLIVQSRATLGIGA.

The signal sequence occupies residues 1–18 (MKWVTLISFIFLFSSATS). Residues 19–23 (RNLQR) constitute a propeptide that is removed on maturation. Albumin domains follow at residues 22-214 (QRFA…IVMR), 215-407 (EKAK…QLNQ), and 408-605 (HIKE…NLIV). Cu cation is bound at residue His30. Glu33 and Asp40 together coordinate Ca(2+). 7 disulfides stabilise this stretch: Cys80–Cys89, Cys102–Cys118, Cys117–Cys128, Cys152–Cys197, Cys196–Cys205, Cys228–Cys274, and Cys273–Cys281. Positions 272, 277, 280, and 283 each coordinate Ca(2+). A Zn(2+)-binding site is contributed by Asp277. Disulfide bonds link Cys293-Cys307, Cys306-Cys317, Cys344-Cys389, Cys388-Cys397, Cys420-Cys466, Cys465-Cys476, Cys489-Cys505, Cys504-Cys515, Cys542-Cys587, and Cys586-Cys595. Asn500 is a glycosylation site (N-linked (GlcNAc...) asparagine).

The protein belongs to the ALB/AFP/VDB family. Plasma.

The protein resides in the secreted. In terms of biological role, binds water, Ca(2+), Na(+), K(+), fatty acids, hormones, bilirubin and drugs. Its main function is the regulation of the colloidal osmotic pressure of blood. The sequence is that of Albumin (ALB) from Gallus gallus (Chicken).